Here is a 136-residue protein sequence, read N- to C-terminus: Urease subunit beta (136 aa).

Positions 112 to 136 (ENDEYAGVFGDNGTENVNKKGGKRS) are disordered.

The protein belongs to the urease beta subunit family. In terms of assembly, heterotrimer of UreA (gamma), UreB (beta) and UreC (alpha) subunits. Three heterotrimers associate to form the active enzyme.

It is found in the cytoplasm. It catalyses the reaction urea + 2 H2O + H(+) = hydrogencarbonate + 2 NH4(+). It functions in the pathway nitrogen metabolism; urea degradation; CO(2) and NH(3) from urea (urease route): step 1/1. The polypeptide is Urease subunit beta (Staphylococcus aureus (strain MRSA252)).